A 156-amino-acid chain; its full sequence is Putative pre-16S rRNA nuclease (156 aa).

Belongs to the YqgF nuclease family.

The protein resides in the cytoplasm. Functionally, could be a nuclease involved in processing of the 5'-end of pre-16S rRNA. This Phenylobacterium zucineum (strain HLK1) protein is Putative pre-16S rRNA nuclease.